The sequence spans 348 residues: Ileal sodium/bile acid cotransporter (348 aa).

Residues M1 to A28 lie on the Extracellular side of the membrane. N-linked (GlcNAc...) asparagine glycosylation is found at N3 and N10. A helical transmembrane segment spans residues I29–M49. Residues G50–S87 are Cytoplasmic-facing. Residues V88–G108 form a helical membrane-spanning segment. The Extracellular segment spans residues G109–S126. Residues V127 to V147 form a helical membrane-spanning segment. Over Y148 to T157 the chain is Cytoplasmic. Residues I158 to F178 traverse the membrane as a helical segment. Over G179–K195 the chain is Extracellular. Residues I196–Y216 form a helical membrane-spanning segment. Residues Q217–P224 lie on the Cytoplasmic side of the membrane. The chain crosses the membrane as a helical span at residues K225 to A245. Residues R246–N284 lie on the Extracellular side of the membrane. The helical transmembrane segment at L285 to L305 threads the bilayer. The Cytoplasmic portion of the chain corresponds to G306–K348. Residues N328–K348 form a disordered region. S335 bears the Phosphoserine mark.

The protein belongs to the bile acid:sodium symporter (BASS) (TC 2.A.28) family. Monomer and homodimer. In terms of tissue distribution, expressed in ileum.

It is found in the membrane. The enzyme catalyses taurocholate(out) + 2 Na(+)(out) = taurocholate(in) + 2 Na(+)(in). It catalyses the reaction cholate(out) + 2 Na(+)(out) = cholate(in) + 2 Na(+)(in). The catalysed reaction is taurochenodeoxycholate(out) + 2 Na(+)(out) = taurochenodeoxycholate(in) + 2 Na(+)(in). It carries out the reaction tauroursodeoxycholate(out) + 2 Na(+)(out) = tauroursodeoxycholate(in) + 2 Na(+)(in). The enzyme catalyses glycocholate(out) + 2 Na(+)(out) = glycocholate(in) + 2 Na(+)(in). It catalyses the reaction tauronorcholate(out) + 2 Na(+)(out) = tauronorcholate(in) + 2 Na(+)(in). The catalysed reaction is tauroallocholate(out) + 2 Na(+)(out) = tauroallocholate(in) + 2 Na(+)(in). It carries out the reaction taurodeoxycholate(out) + 2 Na(+)(out) = taurodeoxycholate(in) + 2 Na(+)(in). The enzyme catalyses tauro-beta-muricholate(out) + 2 Na(+)(out) = tauro-beta-muricholate(in) + 2 Na(+)(in). Plays a critical role in the sodium-dependent reabsorption of bile acids from the lumen of the small intestine. Transports various bile acids, unconjugated or conjugated, such as cholate and taurocholate. Also responsible for bile acid transport in the renal proximal tubules, a salvage mechanism that helps conserve bile acids. Works collaboratively with the Na(+)-taurocholate cotransporting polypeptide (NTCP), the organic solute transporter (OST), and the bile salt export pump (BSEP), to ensure efficacious biological recycling of bile acids during enterohepatic circulation. The chain is Ileal sodium/bile acid cotransporter (Slc10a2) from Mus musculus (Mouse).